The sequence spans 90 residues: uncharacterized protein (90 aa).

The protein belongs to the barstar family.

This is an uncharacterized protein from Escherichia coli O157:H7.